The chain runs to 432 residues: ATP-dependent RNA helicase SUB2 (432 aa).

The span at 1–17 (MSAEGQEELLDYSDSEE) shows a compositional bias: acidic residues. Positions 1 to 35 (MSAEGQEELLDYSDSEEIAVPSNAPEAGADGADKD) are disordered. Positions 48–76 (TGFRDFLLKPELLRAIGDCGFEHPSEVQQ) match the Q motif motif. A Helicase ATP-binding domain is found at 79 to 254 (IPQSILGTDV…KKFMQNPLEI (176 aa)). 92–99 (AKSGLGKT) contributes to the ATP binding site. A DEAD box motif is present at residues 201–204 (DECD). A Helicase C-terminal domain is found at 266–427 (GLQQYYLKLD…EFPEEGVDSS (162 aa)).

The protein belongs to the DEAD box helicase family. DECD subfamily.

Its subcellular location is the nucleus. The catalysed reaction is ATP + H2O = ADP + phosphate + H(+). Its function is as follows. ATP-binding RNA helicase involved in transcription elongation and required for the export of mRNA out of the nucleus. SUB2 also plays a role in pre-mRNA splicing and spliceosome assembly. May be involved in rDNA and telomeric silencing, and maintenance of genome integrity. The polypeptide is ATP-dependent RNA helicase SUB2 (SUB2) (Meyerozyma guilliermondii (strain ATCC 6260 / CBS 566 / DSM 6381 / JCM 1539 / NBRC 10279 / NRRL Y-324) (Yeast)).